The chain runs to 196 residues: Protein hunchback (196 aa).

2 disordered regions span residues 16-60 and 90-196; these read SHHH…NTNL and AMTP…KYMA. The segment covering 17-30 has biased composition (basic residues); sequence HHHHHHHAHHSYHQ. The segment covering 92 to 103 has biased composition (polar residues); it reads TPSSSNNDQNSP. The span at 125 to 144 shows a compositional bias: low complexity; that stretch reads PTATTTTTPAAAAPTTTAAT. Residues 176–196 show a composition bias toward basic and acidic residues; that stretch reads AEREKEHDLMSNSSEDMKYMA.

The protein belongs to the hunchback C2H2-type zinc-finger protein family.

The protein resides in the nucleus. In terms of biological role, gap class segmentation protein that controls development of head structures. The protein is Protein hunchback (hb) of Drosophila silvestris (Fruit fly).